We begin with the raw amino-acid sequence, 650 residues long: Macrolide export ATP-binding/permease protein MacB (650 aa).

Residues 5–243 form the ABC transporter domain; that stretch reads LELKDIRRSY…AGGTEPVVNT (239 aa). 41–48 serves as a coordination point for ATP; it reads GASGSGKS. 5 helical membrane passes run 273–293, 523–543, 554–574, 580–600, and 613–633; these read LLTM…VVVG, LFLT…VMNI, ANDI…HLFF, VLPA…AFTL, and PLAL…FGWL.

It belongs to the ABC transporter superfamily. Macrolide exporter (TC 3.A.1.122) family. As to quaternary structure, homodimer. Part of the tripartite efflux system MacAB-TolC, which is composed of an inner membrane transporter, MacB, a periplasmic membrane fusion protein, MacA, and an outer membrane component, TolC. The complex forms a large protein conduit and can translocate molecules across both the inner and outer membranes. Interacts with MacA.

It is found in the cell inner membrane. Part of the tripartite efflux system MacAB-TolC. MacB is a non-canonical ABC transporter that contains transmembrane domains (TMD), which form a pore in the inner membrane, and an ATP-binding domain (NBD), which is responsible for energy generation. Confers resistance against macrolides. In Shigella dysenteriae serotype 1 (strain Sd197), this protein is Macrolide export ATP-binding/permease protein MacB.